Consider the following 107-residue polypeptide: Large ribosomal subunit protein uL24 (107 aa).

Belongs to the universal ribosomal protein uL24 family. In terms of assembly, part of the 50S ribosomal subunit.

One of two assembly initiator proteins, it binds directly to the 5'-end of the 23S rRNA, where it nucleates assembly of the 50S subunit. Its function is as follows. One of the proteins that surrounds the polypeptide exit tunnel on the outside of the subunit. This chain is Large ribosomal subunit protein uL24, found in Nitratidesulfovibrio vulgaris (strain DSM 19637 / Miyazaki F) (Desulfovibrio vulgaris).